The chain runs to 688 residues: Translation initiation factor IF-2 (688 aa).

2 stretches are compositionally biased toward basic and acidic residues: residues 53 to 62 and 86 to 95; these read GKEKSEKTKE and KRDDKNEKVN. Positions 53–100 are disordered; it reads GKEKSEKTKEEDDEIETTAKNPIKESMNNKKSNKRDDKNEKVNTENAE. In terms of domain architecture, tr-type G spans 187 to 354; it reads KRSPIITVMG…MILLSSEILE (168 aa). The G1 stretch occupies residues 196-203; that stretch reads GHVDHGKT. 196–203 contributes to the GTP binding site; sequence GHVDHGKT. The G2 stretch occupies residues 221-225; the sequence is GITQH. The G3 stretch occupies residues 242–245; the sequence is DTPG. Residues 242 to 246 and 296 to 299 each bind GTP; these read DTPGH and NKID. Residues 296 to 299 are G4; that stretch reads NKID. Residues 332-334 form a G5 region; that stretch reads SAH.

The protein belongs to the TRAFAC class translation factor GTPase superfamily. Classic translation factor GTPase family. IF-2 subfamily.

Its subcellular location is the cytoplasm. One of the essential components for the initiation of protein synthesis. Protects formylmethionyl-tRNA from spontaneous hydrolysis and promotes its binding to the 30S ribosomal subunits. Also involved in the hydrolysis of GTP during the formation of the 70S ribosomal complex. In Clostridium botulinum (strain Kyoto / Type A2), this protein is Translation initiation factor IF-2.